A 374-amino-acid polypeptide reads, in one-letter code: 4-hydroxy-3-methylbut-2-en-1-yl diphosphate synthase (flavodoxin) (374 aa).

Positions 270, 273, 305, and 312 each coordinate [4Fe-4S] cluster.

The protein belongs to the IspG family. The cofactor is [4Fe-4S] cluster.

It catalyses the reaction (2E)-4-hydroxy-3-methylbut-2-enyl diphosphate + oxidized [flavodoxin] + H2O + 2 H(+) = 2-C-methyl-D-erythritol 2,4-cyclic diphosphate + reduced [flavodoxin]. It functions in the pathway isoprenoid biosynthesis; isopentenyl diphosphate biosynthesis via DXP pathway; isopentenyl diphosphate from 1-deoxy-D-xylulose 5-phosphate: step 5/6. Converts 2C-methyl-D-erythritol 2,4-cyclodiphosphate (ME-2,4cPP) into 1-hydroxy-2-methyl-2-(E)-butenyl 4-diphosphate. The protein is 4-hydroxy-3-methylbut-2-en-1-yl diphosphate synthase (flavodoxin) of Yersinia enterocolitica serotype O:8 / biotype 1B (strain NCTC 13174 / 8081).